Reading from the N-terminus, the 286-residue chain is 3-methyl-2-oxobutanoate hydroxymethyltransferase (286 aa).

Positions 67 and 106 each coordinate Mg(2+). Residues 67–68 (DS), D106, and K136 contribute to the 3-methyl-2-oxobutanoate site. Mg(2+) is bound at residue E138. The Proton acceptor role is filled by E204.

This sequence belongs to the PanB family. As to quaternary structure, homodecamer; pentamer of dimers. The cofactor is Mg(2+).

The protein localises to the cytoplasm. It carries out the reaction 3-methyl-2-oxobutanoate + (6R)-5,10-methylene-5,6,7,8-tetrahydrofolate + H2O = 2-dehydropantoate + (6S)-5,6,7,8-tetrahydrofolate. It participates in cofactor biosynthesis; (R)-pantothenate biosynthesis; (R)-pantoate from 3-methyl-2-oxobutanoate: step 1/2. Catalyzes the reversible reaction in which hydroxymethyl group from 5,10-methylenetetrahydrofolate is transferred onto alpha-ketoisovalerate to form ketopantoate. The chain is 3-methyl-2-oxobutanoate hydroxymethyltransferase from Mycobacterium leprae (strain TN).